A 359-amino-acid chain; its full sequence is Popy class I histocompatibility antigen, alpha chain E (359 aa).

The N-terminal stretch at 1–18 (GTLLLLLSEALALTETWA) is a signal peptide. Positions 19–108 (GSHSLKYFHT…LRGYYNQTEA (90 aa)) are alpha-1. Residues 19–302 (GSHSLKYFHT…EPASQTTIPI (284 aa)) are Extracellular-facing. N-linked (GlcNAc...) asparagine glycosylation occurs at Asn104. The interval 109 to 200 (GSHTLQWMHG…EKGKETLLHL (92 aa)) is alpha-2. Cystine bridges form between Cys119–Cys182 and Cys221–Cys277. The tract at residues 201-292 (DPPKTHVTHH…GLPEPLTLRW (92 aa)) is alpha-3. An Ig-like C1-type domain is found at 203-291 (PKTHVTHHRI…EGLPEPLTLR (89 aa)). Residues 293 to 302 (EPASQTTIPI) form a connecting peptide region. Residues 303-326 (VGIFAGLVLLGAVVTGATVVAAVM) form a helical membrane-spanning segment. Topologically, residues 327 to 359 (WRKKSSGGKGGSYSKAEWSDSAQGSESLTACKA) are cytoplasmic. Residues 330 to 359 (KSSGGKGGSYSKAEWSDSAQGSESLTACKA) are disordered. Over residues 346-359 (DSAQGSESLTACKA) the composition is skewed to polar residues. Ser351 bears the Phosphoserine mark.

The protein belongs to the MHC class I family. In terms of assembly, heterodimer of an alpha chain and a beta chain (beta-2-microglobulin).

It localises to the membrane. Functionally, involved in the presentation of foreign antigens to the immune system. The protein is Popy class I histocompatibility antigen, alpha chain E (Popy-E) of Pongo pygmaeus (Bornean orangutan).